Here is a 159-residue protein sequence, read N- to C-terminus: ATP synthase subunit b 2 (159 aa).

Residues 1–21 (MDATFWAFIALVIFVAIVVYM) form a helical membrane-spanning segment.

This sequence belongs to the ATPase B chain family. F-type ATPases have 2 components, F(1) - the catalytic core - and F(0) - the membrane proton channel. F(1) has five subunits: alpha(3), beta(3), gamma(1), delta(1), epsilon(1). F(0) has three main subunits: a(1), b(2) and c(10-14). The alpha and beta chains form an alternating ring which encloses part of the gamma chain. F(1) is attached to F(0) by a central stalk formed by the gamma and epsilon chains, while a peripheral stalk is formed by the delta and b chains.

The protein resides in the cell inner membrane. In terms of biological role, f(1)F(0) ATP synthase produces ATP from ADP in the presence of a proton or sodium gradient. F-type ATPases consist of two structural domains, F(1) containing the extramembraneous catalytic core and F(0) containing the membrane proton channel, linked together by a central stalk and a peripheral stalk. During catalysis, ATP synthesis in the catalytic domain of F(1) is coupled via a rotary mechanism of the central stalk subunits to proton translocation. Its function is as follows. Component of the F(0) channel, it forms part of the peripheral stalk, linking F(1) to F(0). The protein is ATP synthase subunit b 2 of Brucella suis (strain ATCC 23445 / NCTC 10510).